The chain runs to 24 residues: Tryptophanase operon leader peptide (24 aa).

The protein is Tryptophanase operon leader peptide (tnaL) of Escherichia coli O157:H7.